The chain runs to 326 residues: Transcription cofactor vestigial-like protein 3 (326 aa).

The tract at residues 54–82 (SLEVTLPSKQEEEEEEEEDEEEEEKDQPA) is disordered. Lys-62 participates in a covalent cross-link: Glycyl lysine isopeptide (Lys-Gly) (interchain with G-Cter in SUMO2). A compositionally biased stretch (acidic residues) spans 64–78 (EEEEEEEEDEEEEEK). A Glycyl lysine isopeptide (Lys-Gly) (interchain with G-Cter in SUMO2) cross-link involves residue Lys-129. The interval 184–208 (TADPNSWPGHGLHQTGPAPPPTASE) is disordered.

It belongs to the vestigial family.

Its subcellular location is the nucleus. Its function is as follows. May act as a specific coactivator for the mammalian TEFs. This is Transcription cofactor vestigial-like protein 3 from Mus musculus (Mouse).